The following is a 345-amino-acid chain: Mariner Mos1 transposase (345 aa).

The tract at residues 1–112 (MSSFVPNKEQ…VSNRLREMGK (112 aa)) is DNA-binding. DNA-binding regions (H-T-H motif) lie at residues 24 to 55 (TAAE…RFKS) and 89 to 110 (QKQL…LREM). The interval 113 to 125 (IQKVGRWVPHELN) is linker. Residues 126-345 (ERQMERRKNT…CVASDGKYLE (220 aa)) are catalytic. Positions 156, 249, and 284 each coordinate Mg(2+).

As to quaternary structure, homodimer. The complex has a trans arrangement, with each transposon end recognized by the DNA binding region of one transposase monomer and by the active site of the other monomer. Mg(2+) serves as cofactor. Mn(2+) is required as a cofactor.

The protein localises to the nucleus. Mediates transposition of transposon Mos1 by a 'cut and paste' mechanism. Transposases are sequence-specific nucleases and strand transferases that catalyze transposition through an ordered series of events: sequence-specific binding of transposase to the terminal inverted repeats (IR) present at each end of the transposon, pairing of the transposon IRs in a paired-end complex (PEC), cleavage of one or both DNA strands at each transposon end, capture of target DNA, and strand transfer to insert the transposon at a new site. The protein is Mariner Mos1 transposase (mariner\T) of Drosophila mauritiana (Fruit fly).